An 837-amino-acid polypeptide reads, in one-letter code: Putative dimethyl sulfoxide reductase catalytic subunit A (837 aa).

Positions 1–36 form a signal peptide, tat-type signal; that stretch reads MSDTDLNATRRDVLKSGAVAAVGLSGGGLLSTLQEA. Positions 53 to 110 constitute a 4Fe-4S Mo/W bis-MGD-type domain; that stretch reads DQVVKTACSPNCRGKCPLDVFVRDGQIKKVEQQVPAAKTFKRGCTLGMTHLQRVYNAD. [4Fe-4S] cluster-binding residues include cysteine 60, cysteine 64, cysteine 68, and cysteine 96. Asparagine 200 provides a ligand contact to Mo-bis(molybdopterin guanine dinucleotide). A disordered region spans residues 813-837; that stretch reads EHQSNEYTQHNPRGSSGTATDGDSS. A compositionally biased stretch (low complexity) spans 826–837; the sequence is GSSGTATDGDSS.

The protein belongs to the prokaryotic molybdopterin-containing oxidoreductase family. As to quaternary structure, probable multiprotein complex that likely consists of DmsA, DmsB and DmsC. Mo-bis(molybdopterin guanine dinucleotide) is required as a cofactor. [4Fe-4S] cluster serves as cofactor. Post-translationally, predicted to be exported by the Tat system. The position of the signal peptide cleavage has not been experimentally proven.

The protein localises to the cell membrane. The catalysed reaction is dimethyl sulfide + a menaquinone + H2O = dimethyl sulfoxide + a menaquinol. Dimethyl sulfoxide (DMSO) reductase catalyzes the reduction of dimethyl sulfoxide (DMSO) to dimethyl sulfide (DMS) during anaerobic respiration; it can also use trimethylamine N-oxide (TMAO) as terminal electron acceptor. Required for anaerobic respiration on DMSO and TMAO; subunit A is proposed to be catalytically active. The polypeptide is Putative dimethyl sulfoxide reductase catalytic subunit A (dmsA) (Halobacterium salinarum (strain ATCC 700922 / JCM 11081 / NRC-1) (Halobacterium halobium)).